A 156-amino-acid chain; its full sequence is 6,7-dimethyl-8-ribityllumazine synthase (156 aa).

5-amino-6-(D-ribitylamino)uracil is bound by residues Phe-23, 57-59 (AFE), and 81-83 (AVI). 86-87 (AT) serves as a coordination point for (2S)-2-hydroxy-3-oxobutyl phosphate. His-89 acts as the Proton donor in catalysis. Phe-114 is a 5-amino-6-(D-ribitylamino)uracil binding site. Arg-128 contacts (2S)-2-hydroxy-3-oxobutyl phosphate.

Belongs to the DMRL synthase family.

The enzyme catalyses (2S)-2-hydroxy-3-oxobutyl phosphate + 5-amino-6-(D-ribitylamino)uracil = 6,7-dimethyl-8-(1-D-ribityl)lumazine + phosphate + 2 H2O + H(+). It functions in the pathway cofactor biosynthesis; riboflavin biosynthesis; riboflavin from 2-hydroxy-3-oxobutyl phosphate and 5-amino-6-(D-ribitylamino)uracil: step 1/2. In terms of biological role, catalyzes the formation of 6,7-dimethyl-8-ribityllumazine by condensation of 5-amino-6-(D-ribitylamino)uracil with 3,4-dihydroxy-2-butanone 4-phosphate. This is the penultimate step in the biosynthesis of riboflavin. The chain is 6,7-dimethyl-8-ribityllumazine synthase from Campylobacter concisus (strain 13826).